The following is a 356-amino-acid chain: MSTRPQPDWYYHRHPYASTPLAEGEEPQLLPIQDQGNHKKSKIWMAYKAPIVRWYKNAMLVKDNFWKDLESSHQIIWYPYKGISESVGNSDYLHLFFLIFGYYLLNLLLIVAFTSILAWSLLVCIYLPFLGLFALPLAYMQTILISTTLCNSMVKGTDFVLFTRIYGVTFARKGLTELSEACETISFTPFVYRRSHRLGGLFSKRFYLVSLPQFFIFFFWYIFIAFMFLLLLLVPIVGPITINMLPFSPGMGFYYFEPYFVDVLHLDSRKLSKVYYKGFAKWLLYSISSGLLESIPILGGLFIGTNAVGASLWIVKEIKDRDQPAVPPSPPAEPEEPTVGSYAPPIQQSIAHINPP.

Over 1–92 (MSTRPQPDWY…ISESVGNSDY (92 aa)) the chain is Cytoplasmic. The helical transmembrane segment at 93-113 (LHLFFLIFGYYLLNLLLIVAF) threads the bilayer. Residues 114 to 115 (TS) lie on the Extracellular side of the membrane. Residues 116-136 (ILAWSLLVCIYLPFLGLFALP) form a helical membrane-spanning segment. At 137 to 213 (LAYMQTILIS…KRFYLVSLPQ (77 aa)) the chain is on the cytoplasmic side. The chain crosses the membrane as a helical span at residues 214–234 (FFIFFFWYIFIAFMFLLLLLV). At 235-294 (PIVGPITINMLPFSPGMGFYYFEPYFVDVLHLDSRKLSKVYYKGFAKWLLYSISSGLLES) the chain is on the extracellular side. Residues 295–315 (IPILGGLFIGTNAVGASLWIV) traverse the membrane as a helical segment. The Cytoplasmic portion of the chain corresponds to 316 to 356 (KEIKDRDQPAVPPSPPAEPEEPTVGSYAPPIQQSIAHINPP). A disordered region spans residues 322–356 (DQPAVPPSPPAEPEEPTVGSYAPPIQQSIAHINPP). A compositionally biased stretch (polar residues) spans 346 to 356 (IQQSIAHINPP).

This sequence belongs to the LDS family.

It is found in the prospore membrane. The protein resides in the lipid droplet. It localises to the spore wall. In terms of biological role, involved in spore wall assembly. The polypeptide is Outer spore wall protein LDS2 (Saccharomyces cerevisiae (strain ATCC 204508 / S288c) (Baker's yeast)).